The following is an 833-amino-acid chain: P protein (833 aa).

Residues 1–172 lie on the Cytoplasmic side of the membrane; it reads MRLENKDIRL…QVSKLGCCVR (172 aa). Residues 173–193 form a helical membrane-spanning segment; sequence WIKITGLFVFVVLCSILFSLY. Topologically, residues 194 to 325 are extracellular; the sequence is PDQGKFWQLL…QFLGASVEAQ (132 aa). N210, N214, and N269 each carry an N-linked (GlcNAc...) asparagine glycan. A helical transmembrane segment spans residues 326–346; that stretch reads VASAVAILAGVYTLIIFEIVH. Residues 347 to 348 are Cytoplasmic-facing; the sequence is RT. A helical membrane pass occupies residues 349-369; that stretch reads LAAMLGALAALAALAVVGDRP. Residues 370-381 lie on the Extracellular side of the membrane; that stretch reads SLTHVVEWIDFE. Residues 382–402 form a helical membrane-spanning segment; it reads TLALLFGMMILVAVFSETGFF. Residues 403–417 lie on the Cytoplasmic side of the membrane; that stretch reads DYCAVKAYQLSRGRV. A helical transmembrane segment spans residues 418-438; that stretch reads WAMIFMLCLMAAILSAFLDNV. Residues 439 to 501 lie on the Extracellular side of the membrane; that stretch reads TTMLLFTPVT…ELRKMGLDFA (63 aa). A helical transmembrane segment spans residues 502-522; it reads GFTAHMFLGICLVLLVSFPLL. The Cytoplasmic portion of the chain corresponds to 523 to 617; it reads RLLYWNKKLY…RKHRISDRSL (95 aa). A helical transmembrane segment spans residues 618 to 638; sequence LVKCLTVLGFVISMFFLNSFV. A topological domain (extracellular) is located at residue P639. The chain crosses the membrane as a helical span at residues 640–660; it reads GIHLDLGWIAILGAIWLLILA. Residues 661–675 are Cytoplasmic-facing; that stretch reads DIHDFEIILHRVEWA. Residues 676 to 696 traverse the membrane as a helical segment; the sequence is TLLFFAALFVLMEALTHLHLV. At 697–718 the chain is on the extracellular side; the sequence is EYVGEQTALLIKMVPEDQRFAA. Residues 719 to 739 form a helical membrane-spanning segment; sequence AIVLIVWVSALASSLIDNIPF. The Cytoplasmic portion of the chain corresponds to 740–759; the sequence is TATMIPVLLNLSQDPEISLP. A helical transmembrane segment spans residues 760–780; that stretch reads ALPLMYALALGACLGGNGTLI. Over 781–810 the chain is Extracellular; it reads GASTNVVCAGIAEKHGYGFSFMEFFRLGFP. A helical transmembrane segment spans residues 811 to 831; sequence VMLMSCTIGMCYLLIAHIVVG. Over 832 to 833 the chain is Cytoplasmic; the sequence is WN.

It belongs to the CitM (TC 2.A.11) transporter family. In terms of tissue distribution, most abundant in melanocytes. Also present in neonatal and adult eye tissue presumably as a result of expression in the retinal pigmented epithelium and choroid body, known sites of melanogenesis in the eye. Small but detectable amounts also observed in fetal, neonatal and adult brain. Moderate amounts detected in adult testis and ovary. Not detected in heart, kidney, spleen, liver or thymus.

Its subcellular location is the melanosome membrane. It carries out the reaction chloride(in) = chloride(out). Its function is as follows. Contributes to a melanosome-specific anion (chloride) current that modulates melanosomal pH for optimal tyrosinase activity required for melanogenesis and the melanosome maturation. One of the components of the mammalian pigmentary system. May serve as a key control point at which color variation is determined. Major determinant of eye color. Seems to regulate the post-translational processing of tyrosinase, which catalyzes the limiting reaction in melanin synthesis. The sequence is that of P protein (Oca2) from Mus musculus (Mouse).